The chain runs to 228 residues: MPAENIVEVHHLKKSVGQGEHELSILTGVELVVKRGETIALVGESGSGKSTLLAILAGLDDGSSGEVSLVGQPLHNMDEEARAKLRAKHVGFVFQSFMLIPTLNALENVELPALLRGESSAESRNGAKALLEQLGLGKRLDHLPAQLSGGEQQRVALARAFNGRPDVLFADEPTGNLDRQTGDKIADLLFSLNREHGTTLIMVTHDLQLAARCDRCLRLVNGQLQEEA.

The region spanning 7–228 is the ABC transporter domain; it reads VEVHHLKKSV…LVNGQLQEEA (222 aa). 43-50 contacts ATP; it reads GESGSGKS.

It belongs to the ABC transporter superfamily.

This is an uncharacterized protein from Escherichia coli O157:H7.